The primary structure comprises 147 residues: MPTYAPKAGDTTRSWYVIDATDVVLGRLAVAAANLLRGKHKPTFAPNVDGGDFVIVINADKVAISNEKLRNKMAYSHSGYPGGLRKRSIGELMEKHPDRVVEKAIVGMLPKNKLSRQIQSKLRVYAGPEHPHTAQQPVPFEIKQVAQ.

The protein belongs to the universal ribosomal protein uL13 family. Part of the 50S ribosomal subunit.

Functionally, this protein is one of the early assembly proteins of the 50S ribosomal subunit, although it is not seen to bind rRNA by itself. It is important during the early stages of 50S assembly. This chain is Large ribosomal subunit protein uL13, found in Mycobacterium marinum (strain ATCC BAA-535 / M).